Reading from the N-terminus, the 210-residue chain is Large ribosomal subunit protein uL4 (210 aa).

Over residues 41 to 51 the composition is skewed to polar residues; it reads ANARQGTQSTK. Disordered regions lie at residues 41 to 60 and 67 to 98; these read ANARQGTQSTKTRGEVQGSS and KGTGNARMGTNRSPVRRHGGVAFGPRPRDFSK.

It belongs to the universal ribosomal protein uL4 family. In terms of assembly, part of the 50S ribosomal subunit.

Functionally, one of the primary rRNA binding proteins, this protein initially binds near the 5'-end of the 23S rRNA. It is important during the early stages of 50S assembly. It makes multiple contacts with different domains of the 23S rRNA in the assembled 50S subunit and ribosome. Forms part of the polypeptide exit tunnel. The protein is Large ribosomal subunit protein uL4 of Dehalococcoides mccartyi (strain ATCC BAA-2100 / JCM 16839 / KCTC 5957 / BAV1).